Here is a 1076-residue protein sequence, read N- to C-terminus: Envelopment polyprotein (1076 aa).

An N-terminal signal peptide occupies residues 1 to 18 (MIVPIVLFLTLCPSELSA). At 19–455 (WGSPGDPIVC…NPQCYPVKKW (437 aa)) the chain is on the lumenal side. 9 disulfides stabilise this stretch: Cys28–Cys51, Cys145–Cys158, Cys182–Cys329, Cys208–Cys218, Cys260–Cys307, Cys289–Cys294, Cys351–Cys354, Cys358–Cys426, and Cys378–Cys383. The helical transmembrane segment at 456–476 (LFLVVVIMCCYCALMLLTNIL) threads the bilayer. Residues 477–523 (RAIGVWGTWVFAPIKLALALGLRLAKLSKKGLVAVVTRGQMIVNDEL) are golgi retention signal. The Cytoplasmic segment spans residues 477-539 (RAIGVWGTWV…RGEQNEGRQG (63 aa)). Residues 544–566 (GPIRHWLYSPALILILTTSICSG) are internal signal sequence for glycoprotein C. Intrachain disulfides connect Cys567–Cys608, Cys580–Cys590, Cys633–Cys729, Cys648–Cys845, Cys654–Cys702, Cys660–Cys709, Cys664–Cys691, Cys695–Cys700, Cys782–Cys797, and Cys813–Cys827. The Lumenal segment spans residues 567 to 1040 (CDELVHAESK…ALFGDGITRW (474 aa)). The fusion loop stretch occupies residues 654–660 (CRWAGDC). A fusion loop region spans residues 695-709 (CGGAACGCFNAAPSC). N-linked (GlcNAc...) asparagine; by host glycans are attached at residues Asn857 and Asn918. Intrachain disulfides connect Cys912-Cys982 and Cys922-Cys925. A glycan (N-linked (GlcNAc...) asparagine; by host) is linked at Asn940. Residues 1041–1061 (ILGIIGVLLACVMLFVVVVAI) traverse the membrane as a helical segment. Residues 1062 to 1076 (TRRLIKGLTQRAKVA) are Cytoplasmic-facing.

This sequence belongs to the phlebovirus envelope glycoprotein family. As to quaternary structure, heterodimer with glycoprotein C. In terms of assembly, heterodimer with glycoprotein N. Homotrimer (postfusion). Post-translationally, specific enzymatic cleavages in vivo yield mature proteins Glycoprotein C, and Glycoprotein N. In terms of processing, glycosylated. Palmitoylated.

The protein localises to the virion membrane. The protein resides in the host Golgi apparatus membrane. Its subcellular location is the host endoplasmic reticulum membrane. Structural component of the virion that interacts with glycoprotein C. It shields the hydrophobic fusion loops of the glycoprotein C, preventing premature fusion. The glycoprotein protrusions are arranged on an icosahedral lattice, with T=12 triangulation. They are able to attach the virion to the host cell receptor CD209/DC-SIGN and to promote fusion of membranes with the late endosome after endocytosis of the virion. Plays a role in the packaging of ribonucleoproteins during virus assembly. Functionally, structural component of the virion that interacts with glycoprotein N. Acts as a class II fusion protein that is activated upon acidification and subsequent repositioning of the glycoprotein N. The glycoprotein protrusions are arranged on an icosahedral lattice, with T=12 triangulation. They are able to attach the virion to the host cell receptor CD209/DC-SIGN and to promote fusion of membranes with the late endosome after endocytosis of the virion. This chain is Envelopment polyprotein (GP), found in Alces americanus (American moose).